Here is a 695-residue protein sequence, read N- to C-terminus: NAD(P)H-quinone oxidoreductase subunit 5, chloroplastic (695 aa).

15 helical membrane passes run 1–21 (WIIP…LILF), 32–52 (WAFQ…YLSI), 81–101 (IDPL…MVLI), 117–137 (FAYM…SNLI), 139–159 (IYIF…FWFT), 177–197 (GDFG…SFEF), 211–231 (NEVN…GAVA), 250–270 (TPIS…FLVA), 278–298 (VIPY…LLGA), 319–339 (LGYM…FHLI), 346–366 (ALLF…VGYS), 388–408 (ITFL…CFWS), 417–437 (WLYS…TAFY), 535–555 (LFPI…GIPF), and 594–614 (VLSV…YKPI).

It belongs to the complex I subunit 5 family. As to quaternary structure, NDH is composed of at least 16 different subunits, 5 of which are encoded in the nucleus.

The protein localises to the plastid. It localises to the chloroplast thylakoid membrane. It carries out the reaction a plastoquinone + NADH + (n+1) H(+)(in) = a plastoquinol + NAD(+) + n H(+)(out). It catalyses the reaction a plastoquinone + NADPH + (n+1) H(+)(in) = a plastoquinol + NADP(+) + n H(+)(out). Functionally, NDH shuttles electrons from NAD(P)H:plastoquinone, via FMN and iron-sulfur (Fe-S) centers, to quinones in the photosynthetic chain and possibly in a chloroplast respiratory chain. The immediate electron acceptor for the enzyme in this species is believed to be plastoquinone. Couples the redox reaction to proton translocation, and thus conserves the redox energy in a proton gradient. The polypeptide is NAD(P)H-quinone oxidoreductase subunit 5, chloroplastic (ndhF) (Capsicum baccatum (Peruvian pepper)).